A 484-amino-acid polypeptide reads, in one-letter code: tRNA sulfurtransferase (484 aa).

The region spanning 56–158 (NCLKKALSKV…GNRAYFYTEV (103 aa)) is the THUMP domain. Residues 176 to 177 (LV), K257, G279, and Q288 contribute to the ATP site. C336 and C444 are disulfide-bonded. A Rhodanese domain is found at 396–479 (APEGAVIVDL…TRNAVPPSSQ (84 aa)). The active-site Cysteine persulfide intermediate is the C444.

The protein belongs to the ThiI family.

The protein localises to the cytoplasm. The enzyme catalyses [ThiI sulfur-carrier protein]-S-sulfanyl-L-cysteine + a uridine in tRNA + 2 reduced [2Fe-2S]-[ferredoxin] + ATP + H(+) = [ThiI sulfur-carrier protein]-L-cysteine + a 4-thiouridine in tRNA + 2 oxidized [2Fe-2S]-[ferredoxin] + AMP + diphosphate. It catalyses the reaction [ThiS sulfur-carrier protein]-C-terminal Gly-Gly-AMP + S-sulfanyl-L-cysteinyl-[cysteine desulfurase] + AH2 = [ThiS sulfur-carrier protein]-C-terminal-Gly-aminoethanethioate + L-cysteinyl-[cysteine desulfurase] + A + AMP + 2 H(+). It participates in cofactor biosynthesis; thiamine diphosphate biosynthesis. Functionally, catalyzes the ATP-dependent transfer of a sulfur to tRNA to produce 4-thiouridine in position 8 of tRNAs, which functions as a near-UV photosensor. Also catalyzes the transfer of sulfur to the sulfur carrier protein ThiS, forming ThiS-thiocarboxylate. This is a step in the synthesis of thiazole, in the thiamine biosynthesis pathway. The sulfur is donated as persulfide by IscS. This Pyrobaculum aerophilum (strain ATCC 51768 / DSM 7523 / JCM 9630 / CIP 104966 / NBRC 100827 / IM2) protein is tRNA sulfurtransferase.